The sequence spans 192 residues: Leucine-rich repeat-containing protein 51 (192 aa).

LRR repeat units follow at residues 49–71, 80–101, and 103–124; these read SLTQ…NQVA, NLAW…LTTF, and NLSV…NKLA. An LRRCT domain is found at 137 to 175; it reads NPMEEEKGYRQYVLCTLSRITTFDFSGVTKADRTTAEVW.

Its subcellular location is the cytoplasm. In Homo sapiens (Human), this protein is Leucine-rich repeat-containing protein 51.